The primary structure comprises 297 residues: Superoxide dismutase 1 copper chaperone (297 aa).

A Cu cation-binding site is contributed by Cys11. The disordered stretch occupies residues Gly222–Cys263. Low complexity predominate over residues Ser234–Ser257.

Belongs to the CCS1 family.

The protein localises to the cytoplasm. Its function is as follows. Copper chaperone for superoxide dismutase 1 (sod1). Binds copper ions and delivers them specifically to sod1. Also has a role in cell protection against copper ion toxicity during conditions of copper excess. The C-terminal region is thought to act specifically in this sequestration role. The sequence is that of Superoxide dismutase 1 copper chaperone (ccs1) from Schizosaccharomyces pombe (strain 972 / ATCC 24843) (Fission yeast).